The following is a 239-amino-acid chain: Peroxygenase (239 aa).

At Gly2 the chain carries N-acetylglycine. In terms of domain architecture, EF-hand spans 60–95 (HNMSVLQQRAAFFDRNNDGIVYPWETYQGFRAVGFG). Positions 73, 75, 77, and 84 each coordinate Ca(2+). The Proline-knot signature appears at 116-125 (PSWIPSPVLS).

It belongs to the caleosin family. In terms of assembly, homodimer. The cofactor is heme b. Requires Ca(2+) as cofactor. As to expression, expressed in pollen (at protein level). Not expressed in leaf, root, stem, tepal, ovary, style, filament or stigma (at protein level).

It is found in the lipid droplet. The protein localises to the microsome membrane. The catalysed reaction is RH + ROOH = ROH + ROH.. Calcium-binding peroxygenase involved in the degradation of storage lipid in oil bodies. This chain is Peroxygenase, found in Lilium longiflorum (Trumpet lily).